We begin with the raw amino-acid sequence, 176 residues long: Ribosome maturation factor RimM (176 aa).

The PRC barrel domain maps to 97 to 176 (EDEFYWRDLI…QILVDWDPDF (80 aa)).

The protein belongs to the RimM family. As to quaternary structure, binds ribosomal protein uS19.

Its subcellular location is the cytoplasm. Functionally, an accessory protein needed during the final step in the assembly of 30S ribosomal subunit, possibly for assembly of the head region. Essential for efficient processing of 16S rRNA. May be needed both before and after RbfA during the maturation of 16S rRNA. It has affinity for free ribosomal 30S subunits but not for 70S ribosomes. This Shewanella loihica (strain ATCC BAA-1088 / PV-4) protein is Ribosome maturation factor RimM.